Here is a 24-residue protein sequence, read N- to C-terminus: Humanin-like 9 (24 aa).

It belongs to the humanin family. Highly expressed in the kidney, heart muscle and testis.

Its subcellular location is the secreted. It localises to the cytoplasm. In terms of biological role, plays a role as a neuroprotective and antiapoptotic factor. This Homo sapiens (Human) protein is Humanin-like 9.